The following is a 328-amino-acid chain: Cytochrome c biogenesis protein CcsA (328 aa).

The next 8 helical transmembrane spans lie at 12-32 (HISFSVVSLLISIHLITLLLG), 45-65 (GMIITFFCITGLLVTRWIFSG), 72-92 (LYESLIFLSWTFSIFYMVLCL), 100-120 (FNTIITPSILFTQGFATSGLL), 145-165 (MILGYTTLLCGSLLSVAILVI), 234-254 (TISLGFIFLTVGNISGAVWAN), 263-283 (WDPKETWAFITWIIFAIYLHI), and 296-316 (IVASMGFLIIWICYLGINLLG).

It belongs to the CcmF/CycK/Ccl1/NrfE/CcsA family. May interact with Ccs1.

Its subcellular location is the plastid. It is found in the chloroplast thylakoid membrane. In terms of biological role, required during biogenesis of c-type cytochromes (cytochrome c6 and cytochrome f) at the step of heme attachment. This is Cytochrome c biogenesis protein CcsA from Phaseolus vulgaris (Kidney bean).